A 206-amino-acid chain; its full sequence is FMN-dependent NADH:quinone oxidoreductase (206 aa).

FMN-binding positions include S10 and 15 to 17 (SVS).

The protein belongs to the azoreductase type 1 family. As to quaternary structure, homodimer. Requires FMN as cofactor.

It carries out the reaction 2 a quinone + NADH + H(+) = 2 a 1,4-benzosemiquinone + NAD(+). It catalyses the reaction N,N-dimethyl-1,4-phenylenediamine + anthranilate + 2 NAD(+) = 2-(4-dimethylaminophenyl)diazenylbenzoate + 2 NADH + 2 H(+). Its function is as follows. Quinone reductase that provides resistance to thiol-specific stress caused by electrophilic quinones. In terms of biological role, also exhibits azoreductase activity. Catalyzes the reductive cleavage of the azo bond in aromatic azo compounds to the corresponding amines. This is FMN-dependent NADH:quinone oxidoreductase from Acidobacterium capsulatum (strain ATCC 51196 / DSM 11244 / BCRC 80197 / JCM 7670 / NBRC 15755 / NCIMB 13165 / 161).